The sequence spans 75 residues: UPF0346 protein LJ_1103 (75 aa).

This sequence belongs to the UPF0346 family.

In Lactobacillus johnsonii (strain CNCM I-12250 / La1 / NCC 533), this protein is UPF0346 protein LJ_1103.